The primary structure comprises 117 residues: Large ribosomal subunit protein uL18 (117 aa).

The protein belongs to the universal ribosomal protein uL18 family. Part of the 50S ribosomal subunit; part of the 5S rRNA/L5/L18/L25 subcomplex. Contacts the 5S and 23S rRNAs.

Its function is as follows. This is one of the proteins that bind and probably mediate the attachment of the 5S RNA into the large ribosomal subunit, where it forms part of the central protuberance. The sequence is that of Large ribosomal subunit protein uL18 from Thiobacillus denitrificans (strain ATCC 25259 / T1).